Reading from the N-terminus, the 345-residue chain is Biotin synthase (345 aa).

Residues 66–293 (NTVQLSTLLS…RAMVRLSAGR (228 aa)) form the Radical SAM core domain. 3 residues coordinate [4Fe-4S] cluster: Cys81, Cys85, and Cys88. Residues Cys125, Cys156, Cys216, and Arg288 each contribute to the [2Fe-2S] cluster site.

Belongs to the radical SAM superfamily. Biotin synthase family. Homodimer. The cofactor is [4Fe-4S] cluster. It depends on [2Fe-2S] cluster as a cofactor.

The catalysed reaction is (4R,5S)-dethiobiotin + (sulfur carrier)-SH + 2 reduced [2Fe-2S]-[ferredoxin] + 2 S-adenosyl-L-methionine = (sulfur carrier)-H + biotin + 2 5'-deoxyadenosine + 2 L-methionine + 2 oxidized [2Fe-2S]-[ferredoxin]. It functions in the pathway cofactor biosynthesis; biotin biosynthesis; biotin from 7,8-diaminononanoate: step 2/2. Catalyzes the conversion of dethiobiotin (DTB) to biotin by the insertion of a sulfur atom into dethiobiotin via a radical-based mechanism. In Cupriavidus metallidurans (strain ATCC 43123 / DSM 2839 / NBRC 102507 / CH34) (Ralstonia metallidurans), this protein is Biotin synthase.